A 348-amino-acid polypeptide reads, in one-letter code: RNA 3'-terminal phosphate cyclase (348 aa).

ATP contacts are provided by residues Gln-107 and 290-294 (HLADQ). The active-site Tele-AMP-histidine intermediate is His-316.

It belongs to the RNA 3'-terminal cyclase family. Type 1 subfamily.

It localises to the cytoplasm. The catalysed reaction is a 3'-end 3'-phospho-ribonucleotide-RNA + ATP = a 3'-end 2',3'-cyclophospho-ribonucleotide-RNA + AMP + diphosphate. Catalyzes the conversion of 3'-phosphate to a 2',3'-cyclic phosphodiester at the end of RNA. The mechanism of action of the enzyme occurs in 3 steps: (A) adenylation of the enzyme by ATP; (B) transfer of adenylate to an RNA-N3'P to produce RNA-N3'PP5'A; (C) and attack of the adjacent 2'-hydroxyl on the 3'-phosphorus in the diester linkage to produce the cyclic end product. The biological role of this enzyme is unknown but it is likely to function in some aspects of cellular RNA processing. In Nostoc punctiforme (strain ATCC 29133 / PCC 73102), this protein is RNA 3'-terminal phosphate cyclase.